The following is a 129-amino-acid chain: Small ribosomal subunit protein uS11 (129 aa).

It belongs to the universal ribosomal protein uS11 family. As to quaternary structure, part of the 30S ribosomal subunit. Interacts with proteins S7 and S18. Binds to IF-3.

In terms of biological role, located on the platform of the 30S subunit, it bridges several disparate RNA helices of the 16S rRNA. Forms part of the Shine-Dalgarno cleft in the 70S ribosome. In Novosphingobium aromaticivorans (strain ATCC 700278 / DSM 12444 / CCUG 56034 / CIP 105152 / NBRC 16084 / F199), this protein is Small ribosomal subunit protein uS11.